Here is a 248-residue protein sequence, read N- to C-terminus: Cobalt transport protein CbiM (248 aa).

The signal sequence occupies residues 1-29 (MKRVSVKNYLVCLLIAVCAIFVFPANASA). 6 consecutive transmembrane segments (helical) span residues 40 to 60 (GWCISWGVMCMPFLVIGFFSI), 72 to 92 (TLLAMCGAFAFVLSALKMPSV), 104 to 124 (LGAVLFGPTAMSVIGAIILLF), 136 to 156 (TLGANVFSMAIVGPLVSFGVF), 167 to 187 (GLAVFLAVFFGDLMTYVITSV), and 210 to 230 (IFGFTQVPLAVCEGLLTVVIY).

Belongs to the CbiM family. Forms an energy-coupling factor (ECF) transporter complex composed of an ATP-binding protein (A component, CbiO), a transmembrane protein (T component, CbiQ) and 2 possible substrate-capture proteins (S components, CbiM and CbiN) of unknown stoichimetry.

The protein resides in the cell membrane. It participates in cofactor biosynthesis; adenosylcobalamin biosynthesis. In terms of biological role, part of the energy-coupling factor (ECF) transporter complex CbiMNOQ involved in cobalt import. This chain is Cobalt transport protein CbiM, found in Ruminiclostridium cellulolyticum (strain ATCC 35319 / DSM 5812 / JCM 6584 / H10) (Clostridium cellulolyticum).